The sequence spans 317 residues: Sperm acrosome membrane-associated protein 6 (317 aa).

The N-terminal stretch at 1–18 is a signal peptide; it reads MFVFIAKLLIFSSVITSA. At 19-281 the chain is on the extracellular side; the sequence is FTCYQCFIDE…PSFSFWLPRP (263 aa). Disulfide bonds link Cys-21–Cys-143, Cys-24–Cys-146, Cys-35–Cys-51, Cys-128–Cys-151, and Cys-132–Cys-157. N-linked (GlcNAc...) asparagine glycosylation occurs at Asn-29. Positions 123-237 constitute an Ig-like domain; the sequence is PRVSGCLPPC…EVLSQEQSLV (115 aa). Residue Asn-168 is glycosylated (N-linked (GlcNAc...) asparagine). A disulfide bond links Cys-174 and Cys-227. A helical transmembrane segment spans residues 282 to 302; that stretch reads ALLITCLTATMLLIFLSLGAM. Residues 303 to 317 are Cytoplasmic-facing; sequence CRLWYQIRTNVSNPA.

Belongs to the SPACA6 family. In terms of assembly, forms a complex with izumo1 and tmem81 on spermatocyte cell membrane. The complex binds to oocyte protein bncr. In terms of tissue distribution, expressed in testis.

Its subcellular location is the cytoplasmic vesicle. It is found in the secretory vesicle. The protein localises to the acrosome membrane. Sperm protein required for fusion of sperm with the egg membrane during fertilization. May regulate the expression of sperm surface protein DCST2. The chain is Sperm acrosome membrane-associated protein 6 from Danio rerio (Zebrafish).